We begin with the raw amino-acid sequence, 158 residues long: UPF0102 protein GbCGDNIH1_0975 (158 aa).

This sequence belongs to the UPF0102 family.

This chain is UPF0102 protein GbCGDNIH1_0975, found in Granulibacter bethesdensis (strain ATCC BAA-1260 / CGDNIH1).